Consider the following 85-residue polypeptide: Large ribosomal subunit protein bL31B (85 aa).

It belongs to the bacterial ribosomal protein bL31 family. Type B subfamily. As to quaternary structure, part of the 50S ribosomal subunit.

This Aliivibrio salmonicida (strain LFI1238) (Vibrio salmonicida (strain LFI1238)) protein is Large ribosomal subunit protein bL31B.